A 372-amino-acid chain; its full sequence is Aminomethyltransferase (372 aa).

Belongs to the GcvT family. In terms of assembly, the glycine cleavage system is composed of four proteins: P, T, L and H.

It carries out the reaction N(6)-[(R)-S(8)-aminomethyldihydrolipoyl]-L-lysyl-[protein] + (6S)-5,6,7,8-tetrahydrofolate = N(6)-[(R)-dihydrolipoyl]-L-lysyl-[protein] + (6R)-5,10-methylene-5,6,7,8-tetrahydrofolate + NH4(+). The glycine cleavage system catalyzes the degradation of glycine. The protein is Aminomethyltransferase of Rubrobacter xylanophilus (strain DSM 9941 / JCM 11954 / NBRC 16129 / PRD-1).